A 313-amino-acid chain; its full sequence is Olfactory receptor 4Q3 (313 aa).

Residues Met1–Leu25 are Extracellular-facing. The N-linked (GlcNAc...) asparagine glycan is linked to Asn8. Residues Phe26–Val49 form a helical membrane-spanning segment. Topologically, residues Gln50–Ser58 are cytoplasmic. A helical membrane pass occupies residues Pro59 to Pro80. The Extracellular portion of the chain corresponds to Lys81–Gln101. A disulfide bond links Cys98 and Cys190. The helical transmembrane segment at Ile102–Tyr121 threads the bilayer. Residues Asp122–Gln140 lie on the Cytoplasmic side of the membrane. A helical membrane pass occupies residues Leu141–Met159. The Extracellular segment spans residues Gln160 to Val196. A helical transmembrane segment spans residues Glu197 to Ala220. The Cytoplasmic portion of the chain corresponds to Ile221 to Lys236. The chain crosses the membrane as a helical span at residues Val237 to Tyr259. Residues Leu260–Lys270 are Extracellular-facing. The chain crosses the membrane as a helical span at residues Ile271 to Leu290. Residues Arg291–Cys313 lie on the Cytoplasmic side of the membrane.

It belongs to the G-protein coupled receptor 1 family.

It localises to the cell membrane. Its function is as follows. Odorant receptor. In Homo sapiens (Human), this protein is Olfactory receptor 4Q3 (OR4Q3).